The primary structure comprises 486 residues: Catalase (486 aa).

The segment at 1 to 28 is disordered; the sequence is MENKKLTAANGRPIADNQNSQTAGPRGP. Catalysis depends on residues H54 and N127. Y337 provides a ligand contact to heme.

The protein belongs to the catalase family. Homodimer. Heme is required as a cofactor.

The enzyme catalyses 2 H2O2 = O2 + 2 H2O. Its function is as follows. Decomposes hydrogen peroxide into water and oxygen; serves to protect cells from the toxic effects of hydrogen peroxide. May be involved in aerotolerance of B.fragilis. In Bacteroides fragilis (strain YCH46), this protein is Catalase (katA).